Consider the following 153-residue polypeptide: Prophage Rz endopeptidase RzpD (153 aa).

In terms of biological role, necessary for host cell lysis. It is believed to code for an endopeptidase that cleaves the amino-carboxyl cross-link between the diaminopimelic acid and D-alanine residues in the murein component of the bacterial cell wall. The protein is Prophage Rz endopeptidase RzpD (rzpD) of Escherichia coli (strain K12).